A 208-amino-acid polypeptide reads, in one-letter code: Methyl-CpG-binding domain protein 3-like 5 (208 aa).

This sequence belongs to the MBD3L family.

The polypeptide is Methyl-CpG-binding domain protein 3-like 5 (MBD3L5) (Homo sapiens (Human)).